The following is a 181-amino-acid chain: uncharacterized protein (181 aa).

The segment at 151 to 181 (AQKKKDFQEPENKHEQLTSTKAPCQENWSDF) is disordered. Over residues 154–166 (KKDFQEPENKHEQ) the composition is skewed to basic and acidic residues. Over residues 167–181 (LTSTKAPCQENWSDF) the composition is skewed to polar residues.

This is an uncharacterized protein from Caenorhabditis elegans.